The chain runs to 270 residues: Hairy and enhancer of split-related protein helt (270 aa).

Residues 1–24 (MNARALYKRPPPVSSSQSEASGKR) form a disordered region. In terms of domain architecture, bHLH spans 59–114 (KTPVSHKVIEKRRRDRINRCLNELGKTVPMALAKQNSGKLEKAEILEMTVQYLRAL). An Orange domain is found at 136–171 (FHYGYHECMKNLVHYLTTVERMETKDTKYARILAFL).

It belongs to the HEY family.

Its subcellular location is the nucleus. In terms of biological role, transcriptional repressor which binds preferentially to the canonical E box sequence 5'-CACGCG-3'. This is Hairy and enhancer of split-related protein helt (helt) from Danio rerio (Zebrafish).